The chain runs to 276 residues: Diaminopimelate epimerase (276 aa).

Substrate contacts are provided by Asn13, Gln46, and Asn66. The active-site Proton donor is Cys75. Substrate contacts are provided by residues 76–77 (GN), Asn159, Asn192, and 210–211 (ER). Cys219 serves as the catalytic Proton acceptor. 220–221 (GS) provides a ligand contact to substrate.

The protein belongs to the diaminopimelate epimerase family. In terms of assembly, homodimer.

The protein localises to the cytoplasm. The enzyme catalyses (2S,6S)-2,6-diaminopimelate = meso-2,6-diaminopimelate. Its pathway is amino-acid biosynthesis; L-lysine biosynthesis via DAP pathway; DL-2,6-diaminopimelate from LL-2,6-diaminopimelate: step 1/1. In terms of biological role, catalyzes the stereoinversion of LL-2,6-diaminopimelate (L,L-DAP) to meso-diaminopimelate (meso-DAP), a precursor of L-lysine and an essential component of the bacterial peptidoglycan. This is Diaminopimelate epimerase from Aliivibrio fischeri (strain ATCC 700601 / ES114) (Vibrio fischeri).